Here is a 201-residue protein sequence, read N- to C-terminus: Two-component response regulator ORR10 (201 aa).

Residues 10-142 enclose the Response regulatory domain; it reads HVLAVDDSLP…DMSKLKPHIL (133 aa). Asp75 is modified (4-aspartylphosphate). A disordered region spans residues 149–201; it reads HYQQEQHLQSNSESNNSSNPTSENSSSSTSTNSHKRKAVDEEILPHTIRPRHS. Over residues 158-180 the composition is skewed to low complexity; it reads SNSESNNSSNPTSENSSSSTSTN.

The protein belongs to the ARR family. Type-A subfamily. In terms of processing, two-component system major event consists of a His-to-Asp phosphorelay between a sensor histidine kinase (HK) and a response regulator (RR). In plants, the His-to-Asp phosphorelay involves an additional intermediate named Histidine-containing phosphotransfer protein (HPt). This multistep phosphorelay consists of a His-Asp-His-Asp sequential transfer of a phosphate group between first a His and an Asp of the HK protein, followed by the transfer to a conserved His of the HPt protein and finally the transfer to an Asp in the receiver domain of the RR protein. As to expression, expressed in mature leaves, and at low levels in roots, shoots and flowers.

Functions as a response regulator involved in His-to-Asp phosphorelay signal transduction system. Phosphorylation of the Asp residue in the receiver domain activates the ability of the protein to promote the transcription of target genes. Type-A response regulators seem to act as negative regulators of the cytokinin signaling. This is Two-component response regulator ORR10 from Oryza sativa subsp. indica (Rice).